The following is a 7968-amino-acid chain: Obscurin (7968 aa).

5 Ig-like domains span residues 10 to 100 (PRFL…LQVD), 110 to 202 (PHFL…LVVD), 236 to 322 (PASP…QTYS), 331 to 414 (PAVP…RTVA), and 420 to 508 (GNLL…VSAP). Cys-31 and Cys-82 are oxidised to a cystine. The segment at 228-249 (EAMRAEGAPASPPSTGTRTCTV) is disordered. Polar residues predominate over residues 240–249 (PSTGTRTCTV). Intrachain disulfides connect Cys-259-Cys-311 and Cys-354-Cys-404. Position 395 is a phosphoserine (Ser-395). Positions 515–612 (PPVDPVVKAR…FPGTVHLAPK (98 aa)) constitute a Fibronectin type-III 1 domain. 12 consecutive Ig-like domains span residues 619–698 (LKAV…MEVR), 701–790 (PGLT…YQLS), 798–884 (LHKD…LRVS), 886–977 (PKVV…DVKE), 978–1066 (PKVV…FRLH), 1070–1161 (PKMM…HITE), 1162–1252 (PKGV…LHIT), 1254–1345 (PKAV…DVSE), 1346–1432 (PKAV…LSFS), 1438–1524 (PKVV…LSFH), 1530–1621 (PKAV…HVAE), and 1622–1719 (PKVV…PQIS). Cystine bridges form between Cys-819/Cys-870, Cys-912/Cys-962, Cys-1004/Cys-1054, Cys-1096/Cys-1146, Cys-1188/Cys-1238, Cys-1280/Cys-1330, Cys-1372/Cys-1422, Cys-1464/Cys-1514, Cys-1556/Cys-1606, Cys-1648/Cys-1698, Cys-1723/Cys-1791, and Cys-1830/Cys-1880. A Fibronectin type-III 2 domain is found at 1731-1808 (KEHEDIILTA…DFPVQVEEVA (78 aa)). 29 consecutive Ig-like domains span residues 1809–1894 (AKFC…LTVS), 1896–1982 (PRVV…AALR), 1987–2071 (PVLF…AKLT), 2077–2162 (VRLV…LVVT), 2165–2249 (PVSF…ASVK), 2289–2380 (PVTL…QSIT), 2468–2559 (PVVL…REVT), 2564–2643 (LQDA…LEVR), 2646–2730 (PVVF…ARVR), 2736–2823 (VGIT…LIVR), 2826–2908 (PAAI…STAS), 2920–2999 (EELT…AQLL), 3003–3092 (RRVH…LRVT), 3095–3183 (PSVF…VHAR), 3184–3268 (PVRF…ATLT), 3273–3356 (PAQF…ASLT), 3359–3444 (PMPA…ATLT), 3449–3532 (PAKF…ATLT), 3537–3620 (PARF…AMLT), 3625–3708 (PIKF…AMLT), 3713–3796 (PSKF…ATLT), 3801–3884 (PARF…ATLT), 3890–3973 (PVFR…ATLT), 3978–4062 (PVRF…ASLS), 4068–4160 (PKFK…PEVT), 4171–4239 (TADE…NHAS), 4248–4337 (PEVT…LKVT), 4340–4427 (NTVV…FLTV), and 4430–4518 (WRLE…ARLT). Intrachain disulfides connect Cys-2187–Cys-2237, Cys-2311–Cys-2361, and Cys-2490–Cys-2540. The cysteines at positions 2668 and 2718 are disulfide-linked. 2 cysteine pairs are disulfide-bonded: Cys-2848-Cys-2898 and Cys-2937-Cys-2987. Ser-2889 carries the post-translational modification Phosphoserine. Intrachain disulfides connect Cys-3117-Cys-3167, Cys-3206-Cys-3256, Cys-3295-Cys-3344, Cys-3383-Cys-3432, Cys-3471-Cys-3520, Cys-3559-Cys-3608, Cys-3647-Cys-3696, Cys-3735-Cys-3784, Cys-3823-Cys-3872, Cys-3911-Cys-3961, Cys-4000-Cys-4050, and Cys-4089-Cys-4141. The residue at position 4015 (Ser-4015) is a Phosphoserine. Cys-4453 and Cys-4508 are oxidised to a cystine. Residues 4525–4619 (PPEDAEVVAR…LPQTVRLAEP (95 aa)) enclose the Fibronectin type-III 3 domain. The Ig-like 47 domain maps to 4624 to 4714 (PPQPSAPESR…AAATFQVALS (91 aa)). A disordered region spans residues 4749–4785 (MSREPTLDSISELPEEDGRSQRLPQEAEEVAPDLSEG). Ser-4750 bears the Phosphoserine mark. Thr-4754 is subject to Phosphothreonine. At Ser-4757 the chain carries Phosphoserine. Thr-4788 carries the post-translational modification Phosphothreonine. Ser-4805 carries the phosphoserine modification. Positions 4820-4860 (LKKAGRPGTSPLASKVGAPAAPSVKPQQQQEPLAAVRPPLG) are disordered. One can recognise an IQ domain in the interval 4872-4901 (MDKAAVKIQAAFKGYKVRKEMKQQEGPMFS). Ig-like domains follow at residues 4898-4989 (PMFS…VVVS) and 5126-5215 (PVFL…AELR). Intrachain disulfides connect Cys-4919–Cys-4971 and Cys-5147–Cys-5199. Residues 5238-5256 (AQGYLSSREQEGTESTTDE) are compositionally biased toward polar residues. The disordered stretch occupies residues 5238–5257 (AQGYLSSREQEGTESTTDEG). 2 consecutive Ig-like domains span residues 5260–5349 (PQVV…ARLL) and 5371–5467 (PRML…LHVS). The segment at 5554-5596 (AKLQVPGGDSDEDSKTPSASPRHGRSRPSSSIQESSSESEDGD) is disordered. Ser-5563 carries the phosphoserine modification. A Phosphothreonine modification is found at Thr-5569. Over residues 5570–5589 (PSASPRHGRSRPSSSIQESS) the composition is skewed to low complexity. Phosphoserine occurs at positions 5571 and 5573. The region spanning 5600–5667 (EIFDIYVVTA…SPAYLDRRLK (68 aa)) is the SH3 domain. The DH domain occupies 5693-5877 (RLSSVIQELL…SALPQRAENK (185 aa)). Positions 5895–6004 (EPIRQGHFIV…WVKEICGIQQ (110 aa)) constitute a PH domain. Arg-5975 contacts a 1,2-diacyl-sn-glycero-3-phospho-(1D-myo-inositol-4,5-bisphosphate). Arg-5980 lines the a 1,2-diacyl-sn-glycero-3-phospho-(1D-myo-inositol-3,4-bisphosphate) pocket. 2 Ig-like domains span residues 6014–6097 (PDFE…GNCS) and 6108–6200 (PRFV…LRIQ). 2 disulfides stabilise this stretch: Cys-6035/Cys-6087 and Cys-6129/Cys-6182. The segment at 6237–6296 (RLLGPKAPGPSTGDLTGPGPCPRGAPALQETGSQPPVTGTSEAPAVPPRVPQPLLHEGPE) is disordered. A compositionally biased stretch (polar residues) spans 6266–6277 (ETGSQPPVTGTS). Residues 6357–6445 (PSMQVTIEDV…GQVLCKAELL (89 aa)) enclose the Ig-like 54 domain. In terms of domain architecture, Protein kinase 1 spans 6468 to 6721 (YEVKEEIGRG…AAQCLSHPWF (254 aa)). Residues 6474-6482 (IGRGVFGFV) and Lys-6497 each bind ATP. Asp-6587 (proton acceptor) is an active-site residue. 3 disordered regions span residues 6777 to 6863 (GVAR…AQGC), 6952 to 7176 (SGTH…TMRK), and 7217 to 7272 (VSQS…TPWE). Phosphoserine is present on Ser-6831. Residues 7052–7061 (AVAPCPPGSF) are compositionally biased toward pro residues. Positions 7115–7139 (SSPGSASQASSSQVSSLRVGSSQVG) are enriched in low complexity. Residues 7160–7172 (DSTPTLQRPQEQA) are compositionally biased toward polar residues. Positions 7227–7242 (EARAESQSEEQQEARA) are enriched in basic and acidic residues. Position 7244 is a phosphoserine (Ser-7244). One can recognise an Ig-like 55 domain in the interval 7463-7552 (PTFLRELSDE…GTVTTTGVLR (90 aa)). An intrachain disulfide couples Cys-7484 to Cys-7536. Residues 7557–7649 (PSSSPCPDIG…PSEQVLLGGP (93 aa)) form the Fibronectin type-III 4 domain. A Protein kinase 2 domain is found at 7672–7924 (FAFQTQIQRG…ASSCLQCPWL (253 aa)). Residues 7678–7686 (IQRGRFSVV) and Lys-7701 contribute to the ATP site. Asp-7791 acts as the Proton acceptor in catalysis.

This sequence belongs to the protein kinase superfamily. CAMK Ser/Thr protein kinase family. As to quaternary structure, interacts (via protein kinase domain 2) with CDH2 and (via protein kinase domain 1) with ATP1B1. Isoform 3 interacts with TTN/titin and calmodulin. Isoform 3 interacts with ANK1 isoform Mu17/ank1.5. It depends on Mg(2+) as a cofactor. In terms of processing, autophosphorylated by protein kinase domains 1 and 2.

The protein localises to the cytoplasm. The protein resides in the myofibril. It is found in the sarcomere. It localises to the m line. Its subcellular location is the z line. The protein localises to the cell membrane. The protein resides in the sarcolemma. It is found in the nucleus. The enzyme catalyses L-seryl-[protein] + ATP = O-phospho-L-seryl-[protein] + ADP + H(+). The catalysed reaction is L-threonyl-[protein] + ATP = O-phospho-L-threonyl-[protein] + ADP + H(+). Structural component of striated muscles which plays a role in myofibrillogenesis. Probably involved in the assembly of myosin into sarcomeric A bands in striated muscle. Has serine/threonine protein kinase activity and phosphorylates N-cadherin CDH2 and sodium/potassium-transporting ATPase subunit ATP1B1. Binds (via the PH domain) strongly to phosphatidylinositol 3,4-bisphosphate (PtdIns(3,4)P2) and phosphatidylinositol 4,5-bisphosphate (PtdIns(4,5)P2), and to a lesser extent to phosphatidylinositol 3-phosphate (PtdIns(3)P), phosphatidylinositol 4-phosphate (PtdIns(4)P), phosphatidylinositol 5-phosphate (PtdIns(5)P) and phosphatidylinositol 3,4,5-trisphosphate (PtdIns(3,4,5)P3). The sequence is that of Obscurin (OBSCN) from Homo sapiens (Human).